The following is a 384-amino-acid chain: Protein Brevis radix-like 4 (384 aa).

2 disordered regions span residues 1-35 (MLTCIARSKRAGDESSGQPDDPDSKNAKSLTSQLK) and 50-78 (PCTAAQGQGQGQGPIKNNPSSSSVKSDFE). The 56-residue stretch at 150–205 (KEWVAQVEPGVLITFVSLPGGGNDLKRIRFSRDMFNKLQAQRWWADNYDKVMELYN) folds into the BRX 1 domain. Disordered stretches follow at residues 214-270 (FPLP…DHNS) and 304-325 (SIRSSSSRDADRSEEMSVSNAS). Positions 221–235 (RSEDENAKVEYHPED) are enriched in basic and acidic residues. Polar residues predominate over residues 260–270 (YSSSDSLDHNS). Residues 309–318 (SSRDADRSEE) show a composition bias toward basic and acidic residues. Positions 329–384 (NEWVEQDEPGVYITIKVLPGGKRELRRVRFSRERFGEMHARLWWEENRARIHEQYL) constitute a BRX 2 domain.

Belongs to the BRX family. In terms of tissue distribution, expressed in roots.

It is found in the nucleus. The sequence is that of Protein Brevis radix-like 4 (BRXL4) from Arabidopsis thaliana (Mouse-ear cress).